The following is a 347-amino-acid chain: Methylthioribose-1-phosphate isomerase (347 aa).

Substrate-binding positions include arginine 45–alanine 47, arginine 88, and glutamine 197. The active-site Proton donor is aspartate 238. Asparagine 248–lysine 249 lines the substrate pocket.

This sequence belongs to the eIF-2B alpha/beta/delta subunits family. MtnA subfamily.

It carries out the reaction 5-(methylsulfanyl)-alpha-D-ribose 1-phosphate = 5-(methylsulfanyl)-D-ribulose 1-phosphate. The protein operates within amino-acid biosynthesis; L-methionine biosynthesis via salvage pathway; L-methionine from S-methyl-5-thio-alpha-D-ribose 1-phosphate: step 1/6. Its function is as follows. Catalyzes the interconversion of methylthioribose-1-phosphate (MTR-1-P) into methylthioribulose-1-phosphate (MTRu-1-P). This Trichormus variabilis (strain ATCC 29413 / PCC 7937) (Anabaena variabilis) protein is Methylthioribose-1-phosphate isomerase.